A 230-amino-acid chain; its full sequence is CRP-like protein Clp (230 aa).

An a nucleoside 3',5'-cyclic phosphate-binding site is contributed by 18 to 139; it reads PSLALDAGTI…APKILYAIGV (122 aa). Residues 158–230 enclose the HTH crp-type domain; sequence LDVTDRIVRT…GKTVVLYGTR (73 aa). Residues 190 to 209 constitute a DNA-binding region (H-T-H motif); that stretch reads RQELARLVGCSREMAGRVLK.

As to quaternary structure, homodimer.

Its subcellular location is the cytoplasm. With respect to regulation, allosterically inhibited by cyclic di-GMP (c-di-GMP), which binds to Clp and abolishes its ability to bind its target gene promoter. Global transcriptional regulator that regulates virulence factors production by activating or repressing the expression of a large set of genes in diffusible signal factor (DSF) pathway. The polypeptide is CRP-like protein Clp (clp) (Xanthomonas axonopodis pv. citri (strain 306)).